A 352-amino-acid chain; its full sequence is MGAALALLGDLVATVSEAAAATGFSVAEIAAGEAAAAIEVQIASLATVEGITSTEAIAAIGLTPQTYAVITGAPGAIAGIAALVQTVSGVSSVAQVGYKFFSEWDHKISTVGLNQQPGMALELFNPEDYDILFPGVNTFVNNIQYLDPRHWGPTLFSAISQAFWHLVRDDLPRLTSQEIERRTQRFFRDSLAKFLEETTWTIVNAPINLYNSIQNYYSALSPIRPSMVRQVAEREGTQVTFGHSYSQSIDDADSIEEVTQRLDLRNKEANVHSGEFIEKTLAPGGANQRIAPQWMLPLLLGLYGTVTPALEAYEDAPSKKKRRMSRGSSQKAKGPRASSKTSYKRRRRSTRS.

Gly2 is lipidated: N-myristoyl glycine; by host. Residues 273–308 (SGEFIEKTLAPGGANQRIAPQWMLPLLLGLYGTVTP) are D1. A helical membrane pass occupies residues 290 to 310 (IAPQWMLPLLLGLYGTVTPAL). Residues 312–352 (AYEDAPSKKKRRMSRGSSQKAKGPRASSKTSYKRRRRSTRS) are disordered. Positions 313–352 (YEDAPSKKKRRMSRGSSQKAKGPRASSKTSYKRRRRSTRS) are DNA-binding. Positions 316–324 (APSKKKRRM) match the Nuclear localization signal motif. Residues 342 to 352 (SYKRRRRSTRS) show a composition bias toward basic residues.

It belongs to the polyomaviruses capsid protein VP2 family. In terms of assembly, forms homooligomers, and heterooligomers with VP3 in the endoplasmic reticulum membrane. Interacts (via D1 domain) with VP1. As to quaternary structure, interacts (via D1 domain) with VP1.

It localises to the virion. The protein resides in the host nucleus. The protein localises to the host endoplasmic reticulum. It is found in the host endoplasmic reticulum membrane. Its function is as follows. Structural protein that resides within the core of the capsid surrounded by 72 VP1 pentamers. Participates in host cell receptor binding together with VP1. Following virus endocytosis and trafficking to the endoplasmic reticulum, VP2 and VP3 form oligomers and integrate into the endoplasmic reticulum membrane. Heterooligomer VP2-VP3 may create a viroporin for transporting the viral genome across the endoplasmic reticulum membrane to the cytoplasm. Nuclear entry of the viral DNA involves the selective exposure and importin recognition of VP2 or VP3 nuclear localization signal (shared C-terminus). Plays a role in virion assembly within the nucleus in particular through a DNA-binding domain located in the C-terminal region. An N-terminal myristoylation suggests a scaffold function for virion assembly. Structural protein that resides within the core of the capsid surrounded by 72 VP1 pentamers. Following virus endocytosis and trafficking to the endoplasmic reticulum, VP2 and VP3 form oligomers and integrate into the endoplasmic reticulum membrane. Heterooligomer VP2-VP3 may create a viroporin for transporting the viral genome across the endoplasmic reticulum membrane to the cytoplasm. Nuclear entry of the viral DNA involves the selective exposure and importin recognition of VP2 or VP3 nuclear localization signal (shared C-terminus). Plays a role in virion assembly within the nucleus. May participate in host cell lysis when associated with VP4. In terms of biological role, viroporin inducing perforation of cellular membranes to trigger virus progeny release. Forms pores of 3 nm inner diameter. VP4 is expressed about 24 hours after the late structural proteins and is not incorporated into the mature virion. The protein is Minor capsid protein VP2 of Simian virus 12 (strain wt100) (SV-12).